We begin with the raw amino-acid sequence, 74 residues long: Large ribosomal subunit protein uL29 (74 aa).

This sequence belongs to the universal ribosomal protein uL29 family.

The polypeptide is Large ribosomal subunit protein uL29 (Cyanothece sp. (strain PCC 7425 / ATCC 29141)).